Consider the following 126-residue polypeptide: C-type natriuretic peptide 1 (126 aa).

The signal sequence occupies residues Met-1 to Ala-22. Positions Arg-23–Arg-104 are excised as a propeptide. Cys-110 and Cys-126 form a disulfide bridge.

This sequence belongs to the natriuretic peptide family.

Its subcellular location is the secreted. In terms of biological role, exhibits natriuretic and vasodepressant activity. Has cGMP-stimulating activity. May help to regulate body fluid homeostasis in a variety of aquatic environments. In Takifugu rubripes (Japanese pufferfish), this protein is C-type natriuretic peptide 1.